The sequence spans 495 residues: Adenosylhomocysteinase (495 aa).

Substrate is bound by residues threonine 71, aspartate 156, and glutamate 218. 219–221 (TTT) is an NAD(+) binding site. The substrate site is built by lysine 248 and aspartate 252. Residues asparagine 253, 282 to 287 (GYGDVG), glutamate 305, asparagine 340, 361 to 363 (IGH), and asparagine 409 each bind NAD(+).

Belongs to the adenosylhomocysteinase family. The cofactor is NAD(+).

Its subcellular location is the cytoplasm. The catalysed reaction is S-adenosyl-L-homocysteine + H2O = L-homocysteine + adenosine. The protein operates within amino-acid biosynthesis; L-homocysteine biosynthesis; L-homocysteine from S-adenosyl-L-homocysteine: step 1/1. Its function is as follows. May play a key role in the regulation of the intracellular concentration of adenosylhomocysteine. This is Adenosylhomocysteinase from Mycobacterium bovis (strain ATCC BAA-935 / AF2122/97).